Here is a 664-residue protein sequence, read N- to C-terminus: Macoilin (664 aa).

The next 4 membrane-spanning stretches (helical) occupy residues 28–48 (TFLYLKFLVVWALVLLADFVL), 75–95 (AFSVFFVCVAFTSNIICLLFI), 120–140 (VCLPTVSLWILFVYIEAAIRF), and 154–174 (FAAHCIGYPVVTLGFGFKSYV). Positions 253–265 (REKGKEKDKDAKK) are enriched in basic and acidic residues. Residues 253–274 (REKGKEKDKDAKKHNLGINNNN) are disordered. S305 is modified (phosphoserine). Residues 320-348 (KNYKNASGVVNSSPRSHSATNGSIPSSSS) show a composition bias toward polar residues. Residues 320–375 (KNYKNASGVVNSSPRSHSATNGSIPSSSSKNEKKQKCTSKSPSTHKDLMENCIPNN) are disordered. The N-linked (GlcNAc...) asparagine glycan is linked to N324. The residue at position 332 (S332) is a Phosphoserine. Residues N340 and N452 are each glycosylated (N-linked (GlcNAc...) asparagine). Residues 630–664 (TSPLSPVSPHYSSKFVETSPSGLDPNASVYQPLKK) form a disordered region. A phosphoserine mark is found at S631 and S634. N655 carries an N-linked (GlcNAc...) asparagine glycan.

It belongs to the macoilin family.

Its subcellular location is the rough endoplasmic reticulum membrane. It localises to the nucleus membrane. Plays a role in the regulation of neuronal activity. The polypeptide is Macoilin (MACO1) (Macaca mulatta (Rhesus macaque)).